We begin with the raw amino-acid sequence, 230 residues long: Sugar fermentation stimulation protein homolog (230 aa).

It belongs to the SfsA family.

In Pelobacter propionicus (strain DSM 2379 / NBRC 103807 / OttBd1), this protein is Sugar fermentation stimulation protein homolog.